The sequence spans 352 residues: B1 bradykinin receptor (352 aa).

Residues 1 to 41 lie on the Extracellular side of the membrane; it reads MASWPPLELQSSNQSQLFPQNATACDNAPEAWDLLHRVLPT. N-linked (GlcNAc...) asparagine glycans are attached at residues Asn13 and Asn21. The chain crosses the membrane as a helical span at residues 42–62; it reads FIISICSFGLLGNLFVLLVFL. At 63–72 the chain is on the cytoplasmic side; that stretch reads LPRRRLNVAE. Residues 73–93 form a helical membrane-spanning segment; it reads IYLANLAASDLVFVLGLPFWA. The Extracellular portion of the chain corresponds to 94–110; sequence ENIWNQFNWPFGALLCR. Cys109 and Cys188 form a disulfide bridge. The helical transmembrane segment at 111–131 threads the bilayer; that stretch reads VINGIIKANLFISIFLVVAIS. Over 132-153 the chain is Cytoplasmic; that stretch reads QDRYCVLVHPMASRRRQRRRQA. The helical transmembrane segment at 154-174 threads the bilayer; it reads RVTCVLIWVVGGLLSIPTFLL. Residues 175–206 are Extracellular-facing; that stretch reads RSIQAVPDLNITACILLLPHEAWHFARIVELN. An N-linked (GlcNAc...) asparagine glycan is attached at Asn184. The chain crosses the membrane as a helical span at residues 207–227; sequence ILAFLLPLAAIIFFNYHILAS. The Cytoplasmic segment spans residues 228 to 250; it reads LRGREEVSRTRCGGSKDSKTTAL. Residues 251-271 traverse the membrane as a helical segment; that stretch reads ILTLVVAFLVCWAPYHFFAFL. At 272 to 294 the chain is on the extracellular side; sequence EFLFQVQAVRGCFWEDFIDLGLQ. Residues 295 to 315 form a helical membrane-spanning segment; sequence LANFLAFTNSSLNPVIYVFVG. Residues 316–352 are Cytoplasmic-facing; that stretch reads RLFRTKVWELYKQCTPKSLAPISSSHRKEIFQLFWRN. Cys329 carries the S-palmitoyl cysteine lipid modification.

The protein belongs to the G-protein coupled receptor 1 family. Bradykinin receptor subfamily. BDKRB1 sub-subfamily.

The protein resides in the cell membrane. Functionally, this is a receptor for bradykinin. Could be a factor in chronic pain and inflammation. The protein is B1 bradykinin receptor (BDKRB1) of Macaca mulatta (Rhesus macaque).